A 320-amino-acid polypeptide reads, in one-letter code: UV DNA damage endonuclease (320 aa).

Belongs to the uve1/UvsE family.

In terms of biological role, component in a DNA repair pathway. Removal of UV LIGHT damaged nucleotides. Recognizes pyrimidine dimers and cleave a phosphodiester bond immediately 5' to the lesion. The sequence is that of UV DNA damage endonuclease from Bacillus velezensis (strain DSM 23117 / BGSC 10A6 / LMG 26770 / FZB42) (Bacillus amyloliquefaciens subsp. plantarum).